The sequence spans 611 residues: Threonine--tRNA ligase (611 aa).

A disordered region spans residues 1-25 (MAGPDRKPVSSAAATTPAPSAPVVL). A compositionally biased stretch (low complexity) spans 9 to 24 (VSSAAATTPAPSAPVV). The tract at residues 209–502 (DHRRIGKDLD…MTENYAGDYP (294 aa)) is catalytic. Zn(2+)-binding residues include cysteine 302, histidine 353, and histidine 479.

Belongs to the class-II aminoacyl-tRNA synthetase family. As to quaternary structure, homodimer. Requires Zn(2+) as cofactor.

The protein resides in the cytoplasm. The catalysed reaction is tRNA(Thr) + L-threonine + ATP = L-threonyl-tRNA(Thr) + AMP + diphosphate + H(+). In terms of biological role, catalyzes the attachment of threonine to tRNA(Thr) in a two-step reaction: L-threonine is first activated by ATP to form Thr-AMP and then transferred to the acceptor end of tRNA(Thr). Also edits incorrectly charged L-seryl-tRNA(Thr). This chain is Threonine--tRNA ligase, found in Parasynechococcus marenigrum (strain WH8102).